A 132-amino-acid polypeptide reads, in one-letter code: Profilin (132 aa).

The protein belongs to the profilin family. In terms of assembly, occurs in many kinds of cells as a complex with monomeric actin in a 1:1 ratio.

The protein resides in the cytoplasm. The protein localises to the cytoskeleton. Binds to actin and affects the structure of the cytoskeleton. At high concentrations, profilin prevents the polymerization of actin, whereas it enhances it at low concentrations. By binding to PIP2, it inhibits the formation of IP3 and DG. This is Profilin from Naegleria pringsheimi (Amoeba).